The sequence spans 362 residues: Probable protein phosphatase 2C 24 (362 aa).

One can recognise a PPM-type phosphatase domain in the interval 77–360; sequence RYGVSSVCGR…DNVSVVVIDL (284 aa). Mn(2+) contacts are provided by Asp117, Gly118, Asp295, and Asp351.

The protein belongs to the PP2C family. Mg(2+) serves as cofactor. Requires Mn(2+) as cofactor.

The catalysed reaction is O-phospho-L-seryl-[protein] + H2O = L-seryl-[protein] + phosphate. It carries out the reaction O-phospho-L-threonyl-[protein] + H2O = L-threonyl-[protein] + phosphate. The protein is Probable protein phosphatase 2C 24 of Arabidopsis thaliana (Mouse-ear cress).